Here is a 367-residue protein sequence, read N- to C-terminus: Alanine racemase (367 aa).

K40 (proton acceptor; specific for D-alanine) is an active-site residue. K40 is modified (N6-(pyridoxal phosphate)lysine). A substrate-binding site is contributed by R136. The active-site Proton acceptor; specific for L-alanine is the Y263. Residue M310 participates in substrate binding.

It belongs to the alanine racemase family. It depends on pyridoxal 5'-phosphate as a cofactor.

The catalysed reaction is L-alanine = D-alanine. The protein operates within amino-acid biosynthesis; D-alanine biosynthesis; D-alanine from L-alanine: step 1/1. In terms of biological role, catalyzes the interconversion of L-alanine and D-alanine. May also act on other amino acids. This Streptococcus pneumoniae (strain Hungary19A-6) protein is Alanine racemase (alr).